Consider the following 454-residue polypeptide: MESNYTGMDGNWALNGTVSVGNGTLISVDEFLHNALPMHLQALFQDGNSQGPLLTMEDLEKAIEFKRASQELVNDNVLAPDGLFVELLRQQEKTLPRLISATSNTQGSFSSWSFAQGLIVGQVSVVLVLIFFIKFFIFSDSSTKTNPNPAKNSSSTNSLSGLSSESRSFISPHFFTSIMNRKGNEQAESNDDENERSRQIDDILEKTYYNVDTHPAESLDWFNVLIGQTIQQLREEAWKKDNIVYSLNAFIERKAQELPSYLDSIKITELDIGHDFPIFSNCRIQYSPNSNGRKLEAKIDIDLNDRLAVGIETRLLLNYPKPLTASLPINVTVSIIRFQACLTVSLTKAEEFVPTSPESVDEDDNDGYFLMFSFAPEYRMEFETQSLIGARSKLENIPKIGSLVEYQIKKWFVERCVEPRFQFIKLPSVWPRSKNTREGKADVDESEPGRETHY.

The Lumenal segment spans residues 1–117 (MESNYTGMDG…SFSSWSFAQG (117 aa)). Residues 118 to 138 (LIVGQVSVVLVLIFFIKFFIF) form a helical membrane-spanning segment. The Cytoplasmic portion of the chain corresponds to 139–454 (SDSSTKTNPN…ESEPGRETHY (316 aa)). The segment at 144–164 (KTNPNPAKNSSSTNSLSGLSS) is disordered. A compositionally biased stretch (low complexity) spans 153-164 (SSSTNSLSGLSS). The SMP-LTD domain occupies 215–427 (PAESLDWFNV…EPRFQFIKLP (213 aa)). A 1,2-diacyl-sn-glycero-3-phosphate-binding residues include Arg253, Trp411, Arg415, Trp430, Arg432, and Ser433. The tract at residues 434–454 (KNTREGKADVDESEPGRETHY) is disordered. Residues 435-454 (NTREGKADVDESEPGRETHY) are compositionally biased toward basic and acidic residues.

Belongs to the MMM1 family. Homodimer. Component of the ER-mitochondria encounter structure (ERMES) or MDM complex, composed of MMM1, MDM10, MDM12 and MDM34. An MMM1 homodimer associates with one molecule of MDM12 on each side in a pairwise head-to-tail manner, and the SMP-LTD domains of MMM1 and MDM12 generate a continuous hydrophobic tunnel for phospholipid trafficking.

Its subcellular location is the endoplasmic reticulum membrane. Component of the ERMES/MDM complex, which serves as a molecular tether to connect the endoplasmic reticulum (ER) and mitochondria. Components of this complex are involved in the control of mitochondrial shape and protein biogenesis, and function in nonvesicular lipid trafficking between the ER and mitochondria. Preferentially binds to glycerophospholipids such as phosphatidylcholoine (PC), phosphatidic acid (PA), phosphatidylglycerol (PG), and phosphatidylserine (PS), but not to phosphatidylethanolamine (PE). The MDM12-MMM1 subcomplex functions in the major beta-barrel assembly pathway that is responsible for biogenesis of all outer membrane beta-barrel proteins, and acts in a late step after the SAM complex. The MDM10-MDM12-MMM1 subcomplex further acts in the TOM40-specific pathway after the action of the MDM12-MMM1 complex. Essential for establishing and maintaining the structure of mitochondria and maintenance of mtDNA nucleoids. This is Maintenance of mitochondrial morphology protein 1 from Zygosaccharomyces rouxii (strain ATCC 2623 / CBS 732 / NBRC 1130 / NCYC 568 / NRRL Y-229).